The chain runs to 295 residues: Xyloglucan endotransglucosylase protein 2 (295 aa).

The signal sequence occupies residues 1–23 (MAMGTHFGGLWLALLCMVSATMG). Positions 24-222 (AVPRKPVDVP…WSKAPFVASY (199 aa)) constitute a GH16 domain. Residue Glu-108 is the Nucleophile of the active site. Catalysis depends on Glu-112, which acts as the Proton donor. Residue Glu-112 participates in xyloglucan binding. An N-linked (GlcNAc...) asparagine glycan is attached at Asn-116. Residues 125 to 127 (QTN), 135 to 137 (DRE), 201 to 202 (DW), and Gly-206 each bind xyloglucan. 2 cysteine pairs are disulfide-bonded: Cys-230–Cys-239 and Cys-276–Cys-289. Xyloglucan is bound at residue Arg-281.

The protein belongs to the glycosyl hydrolase 16 family. XTH group 1 subfamily. In terms of processing, contains at least one intrachain disulfide bond essential for its enzymatic activity. Expressed in fruit pulp.

The protein resides in the secreted. It is found in the cell wall. The protein localises to the extracellular space. Its subcellular location is the apoplast. It catalyses the reaction breaks a beta-(1-&gt;4) bond in the backbone of a xyloglucan and transfers the xyloglucanyl segment on to O-4 of the non-reducing terminal glucose residue of an acceptor, which can be a xyloglucan or an oligosaccharide of xyloglucan.. Its function is as follows. Catalyzes xyloglucan endotransglycosylation (XET). Cleaves and religates xyloglucan polymers. Does not catalyze xyloglucan endohydrolysis (XEH). Probably involved in cell wall restructuring during fruit ripening and postharvest fruit softening. In Diospyros kaki (Kaki persimmon), this protein is Xyloglucan endotransglucosylase protein 2.